A 157-amino-acid polypeptide reads, in one-letter code: Probable succinate transporter subunit YjjB (157 aa).

Helical transmembrane passes span 8-28 (FALA…AMVF), 50-70 (MILM…SMLV), 87-107 (VFTV…TAMI), and 129-149 (FLTA…PGLW).

Belongs to the ThrE exporter (TC 2.A.79) family. In terms of assembly, the transporter is composed of YjjB and YjjP.

It is found in the cell inner membrane. In terms of biological role, involved in succinate export with YjjP. Both proteins are required for export. This Escherichia coli (strain ATCC 8739 / DSM 1576 / NBRC 3972 / NCIMB 8545 / WDCM 00012 / Crooks) protein is Probable succinate transporter subunit YjjB.